A 421-amino-acid polypeptide reads, in one-letter code: Serine protease HTRA2, mitochondrial (421 aa).

Residues 63–81 (VIRFFVPFSLGALASTMVA) traverse the membrane as a helical segment. An IAP-binding motif is present at residues 74–77 (ALAS). A serine protease region spans residues 138 to 301 (SNGSGFVIEQ…IPIDYVKVFL (164 aa)). Residues histidine 156, aspartate 188, and serine 265 each act as charge relay system in the active site. In terms of domain architecture, PDZ spans 324–409 (MGITMLTLTP…ELDIVILRGV (86 aa)).

This sequence belongs to the peptidase S1C family. In terms of assembly, interacts with th/DIAP1 (via BIR 2 domain).

The protein resides in the mitochondrion intermembrane space. It is found in the mitochondrion membrane. The catalysed reaction is Cleavage of non-polar aliphatic amino-acids at the P1 position, with a preference for Val, Ile and Met. At the P2 and P3 positions, Arg is selected most strongly with a secondary preference for other hydrophilic residues.. In terms of biological role, serine protease that shows proteolytic activity against a non-specific substrate beta-casein. Promotes or induces cell death either by direct binding to and inhibition of BIRC proteins (also called inhibitor of apoptosis proteins, IAPs), leading to an increase in caspase activity, or by a BIRC inhibition-independent, caspase-independent and serine protease activity-dependent mechanism. Can antagonize antiapoptotic activity of th/Diap1 by directly inducing the degradation of th/Diap1. This Drosophila virilis (Fruit fly) protein is Serine protease HTRA2, mitochondrial.